A 202-amino-acid polypeptide reads, in one-letter code: Glycerol-3-phosphate acyltransferase (202 aa).

The next 5 helical transmembrane spans lie at 3-23 (ILLA…VVVS), 51-71 (KAAI…VWLV), 74-94 (FGIG…LGHL), 116-136 (AVHP…AFFF), and 140-160 (SLAA…LFGT).

The protein belongs to the PlsY family. Probably interacts with PlsX.

Its subcellular location is the cell inner membrane. It carries out the reaction an acyl phosphate + sn-glycerol 3-phosphate = a 1-acyl-sn-glycero-3-phosphate + phosphate. Its pathway is lipid metabolism; phospholipid metabolism. Its function is as follows. Catalyzes the transfer of an acyl group from acyl-phosphate (acyl-PO(4)) to glycerol-3-phosphate (G3P) to form lysophosphatidic acid (LPA). This enzyme utilizes acyl-phosphate as fatty acyl donor, but not acyl-CoA or acyl-ACP. This Burkholderia thailandensis (strain ATCC 700388 / DSM 13276 / CCUG 48851 / CIP 106301 / E264) protein is Glycerol-3-phosphate acyltransferase.